The chain runs to 541 residues: Formimidoyltransferase-cyclodeaminase (541 aa).

A formiminotransferase N-subdomain region spans residues 1 to 181 (MSQLVECVPN…GATVTGARKF (181 aa)). Histidine 82 serves as the catalytic For formimidoyltransferase activity. 163–172 (GPSSFVPSWG) is a binding site for folate. A formiminotransferase C-subdomain region spans residues 182-326 (LIAFNINLLS…PKERIIEYLV (145 aa)). The interval 327–334 (PDSGPEQS) is linker. The tract at residues 335–541 (LLDASLRAFV…VLGSLEARKE (207 aa)) is cyclodeaminase/cyclohydrolase. Residue aspartate 412 is the For cyclodeaminase activity of the active site. Serine 520 carries the post-translational modification Phosphoserine.

In the C-terminal section; belongs to the cyclodeaminase/cyclohydrolase family. This sequence in the N-terminal section; belongs to the formiminotransferase family. As to quaternary structure, homooctamer, including four polyglutamate binding sites. The subunits are arranged as a tetramer of dimers, and form a planar ring-shaped structure. In terms of tissue distribution, specifically expressed in liver (at protein level).

It is found in the cytoplasm. Its subcellular location is the cytosol. It localises to the golgi apparatus. The protein localises to the cytoskeleton. The protein resides in the microtubule organizing center. It is found in the centrosome. Its subcellular location is the centriole. It catalyses the reaction 5-formimidoyltetrahydrofolate + L-glutamate = N-formimidoyl-L-glutamate + (6S)-5,6,7,8-tetrahydrofolate. The catalysed reaction is 5-formimidoyltetrahydrofolate + 2 H(+) = (6R)-5,10-methenyltetrahydrofolate + NH4(+). The protein operates within amino-acid degradation; L-histidine degradation into L-glutamate; L-glutamate from N-formimidoyl-L-glutamate (transferase route): step 1/1. Its function is as follows. Folate-dependent enzyme, that displays both transferase and deaminase activity. Serves to channel one-carbon units from formiminoglutamate to the folate pool. In terms of biological role, binds and promotes bundling of vimentin filaments originating from the Golgi. The polypeptide is Formimidoyltransferase-cyclodeaminase (Ftcd) (Rattus norvegicus (Rat)).